The chain runs to 749 residues: Protein lin-54 homolog (749 aa).

Lysine 139 is covalently cross-linked (Glycyl lysine isopeptide (Lys-Gly) (interchain with G-Cter in SUMO2)). Lysine 244 and lysine 249 each carry N6-acetyllysine. A phosphoserine mark is found at serine 264, serine 282, serine 310, and serine 314. Lysine 357 participates in a covalent cross-link: Glycyl lysine isopeptide (Lys-Gly) (interchain with G-Cter in SUMO2). In terms of domain architecture, CRC spans 521–634; the sequence is PRKPCNCTKS…KCIGCKNFEE (114 aa). The segment at 523 to 536 is DNA-binding; the sequence is KPCNCTKSLCLKLY. The Zn(2+) site is built by cysteine 525, cysteine 527, cysteine 532, cysteine 537, cysteine 539, cysteine 546, cysteine 549, cysteine 551, and cysteine 554. Residues 583 to 596 form a linker region; sequence IGKGKEGESDRRHS. Zn(2+)-binding residues include cysteine 599, cysteine 601, cysteine 606, cysteine 611, cysteine 613, cysteine 620, cysteine 624, cysteine 626, and cysteine 629. A DNA-binding region spans residues 599 to 612; sequence CNCKRSGCLKNYCE. Serine 635 is modified (phosphoserine). Glycyl lysine isopeptide (Lys-Gly) (interchain with G-Cter in SUMO2) cross-links involve residues lysine 639, lysine 659, and lysine 661.

Belongs to the lin-54 family. Component of the DREAM complex (also named LINC complex) at least composed of E2F4, E2F5, LIN9, LIN37, LIN52, LIN54, MYBL1, MYBL2, RBL1, RBL2, RBBP4, RBL2, TFDP1 and TFDP2. The complex exists in quiescent cells where it represses cell cycle-dependent genes. It dissociates in S phase when LIN9, LIN37, LIN52 and LIN54 form a subcomplex that binds to MYBL2.

The protein resides in the nucleus. Functionally, component of the DREAM complex, a multiprotein complex that can both act as a transcription activator or repressor depending on the context. In G0 phase, the complex binds to more than 800 promoters and is required for repression of E2F target genes. In S phase, the complex selectively binds to the promoters of G2/M genes whose products are required for mitosis and participates in their cell cycle dependent activation. In the complex, acts as a DNA-binding protein that binds the promoter of CDK1 in a sequence-specific manner. Specifically recognizes the consensus motif 5'-TTYRAA-3' in target DNA. In Rattus norvegicus (Rat), this protein is Protein lin-54 homolog (Lin54).